The following is a 159-amino-acid chain: 2-C-methyl-D-erythritol 2,4-cyclodiphosphate synthase (159 aa).

The a divalent metal cation site is built by aspartate 8 and histidine 10. Residues 8–10 (DVH) and 34–35 (HS) each bind 4-CDP-2-C-methyl-D-erythritol 2-phosphate. Position 42 (histidine 42) interacts with a divalent metal cation. Residues 56–58 (DIG), 61–65 (FPDTD), 100–106 (AQAPKML), 132–135 (TTTE), phenylalanine 139, and arginine 142 contribute to the 4-CDP-2-C-methyl-D-erythritol 2-phosphate site.

It belongs to the IspF family. As to quaternary structure, homotrimer. A divalent metal cation is required as a cofactor.

It carries out the reaction 4-CDP-2-C-methyl-D-erythritol 2-phosphate = 2-C-methyl-D-erythritol 2,4-cyclic diphosphate + CMP. The protein operates within isoprenoid biosynthesis; isopentenyl diphosphate biosynthesis via DXP pathway; isopentenyl diphosphate from 1-deoxy-D-xylulose 5-phosphate: step 4/6. Its function is as follows. Involved in the biosynthesis of isopentenyl diphosphate (IPP) and dimethylallyl diphosphate (DMAPP), two major building blocks of isoprenoid compounds. Catalyzes the conversion of 4-diphosphocytidyl-2-C-methyl-D-erythritol 2-phosphate (CDP-ME2P) to 2-C-methyl-D-erythritol 2,4-cyclodiphosphate (ME-CPP) with a corresponding release of cytidine 5-monophosphate (CMP). The sequence is that of 2-C-methyl-D-erythritol 2,4-cyclodiphosphate synthase from Escherichia coli O127:H6 (strain E2348/69 / EPEC).